A 169-amino-acid polypeptide reads, in one-letter code: Peptide methionine sulfoxide reductase MsrA (169 aa).

C10 is a catalytic residue.

This sequence belongs to the MsrA Met sulfoxide reductase family.

The catalysed reaction is L-methionyl-[protein] + [thioredoxin]-disulfide + H2O = L-methionyl-(S)-S-oxide-[protein] + [thioredoxin]-dithiol. It carries out the reaction [thioredoxin]-disulfide + L-methionine + H2O = L-methionine (S)-S-oxide + [thioredoxin]-dithiol. Functionally, has an important function as a repair enzyme for proteins that have been inactivated by oxidation. Catalyzes the reversible oxidation-reduction of methionine sulfoxide in proteins to methionine. In Streptococcus equi subsp. equi (strain 4047), this protein is Peptide methionine sulfoxide reductase MsrA.